Here is a 366-residue protein sequence, read N- to C-terminus: Endophilin-A (366 aa).

Positions 18-248 constitute a BAR domain; the sequence is TEKMGGAEGT…LQEKRSEAES (231 aa). Residues 227 to 247 are a coiled coil; the sequence is QCADVLRGLQETLQEKRSEAE. The disordered stretch occupies residues 266 to 295; the sequence is GGGGGLNEDGTPSHISSSASPLPSPMRSPA. Low complexity predominate over residues 277-294; it reads PSHISSSASPLPSPMRSP. In terms of domain architecture, SH3 spans 305-364; it reads QQQPCCQALYDFDPENPGELGFKENDIITLLNRVDDNWYEGSVNGRTGYFPQSYVQVQVP.

This sequence belongs to the endophilin family.

Its subcellular location is the cytoplasm. It localises to the membrane. In terms of biological role, required presynaptically at the neuromuscular junction. Implicated in synaptic vesicle endocytosis. This Drosophila willistoni (Fruit fly) protein is Endophilin-A.